A 348-amino-acid polypeptide reads, in one-letter code: Holliday junction branch migration complex subunit RuvB (348 aa).

The segment at 1 to 183 (MTDPSRLVTP…FGIPVRLNFY (183 aa)) is large ATPase domain (RuvB-L). Residues Leu-22, Arg-23, Gly-64, Lys-67, Thr-68, Thr-69, 130 to 132 (EDF), Arg-173, Tyr-183, and Arg-220 contribute to the ATP site. Thr-68 is a binding site for Mg(2+). Residues 184–254 (TIEELESIVS…IADHALGALE (71 aa)) are small ATPAse domain (RuvB-S). A head domain (RuvB-H) region spans residues 257-348 (AAGLDAMDRR…FGLFGGEEEA (92 aa)). DNA-binding residues include Arg-293, Arg-312, and Arg-317.

This sequence belongs to the RuvB family. Homohexamer. Forms an RuvA(8)-RuvB(12)-Holliday junction (HJ) complex. HJ DNA is sandwiched between 2 RuvA tetramers; dsDNA enters through RuvA and exits via RuvB. An RuvB hexamer assembles on each DNA strand where it exits the tetramer. Each RuvB hexamer is contacted by two RuvA subunits (via domain III) on 2 adjacent RuvB subunits; this complex drives branch migration. In the full resolvosome a probable DNA-RuvA(4)-RuvB(12)-RuvC(2) complex forms which resolves the HJ.

The protein localises to the cytoplasm. The enzyme catalyses ATP + H2O = ADP + phosphate + H(+). In terms of biological role, the RuvA-RuvB-RuvC complex processes Holliday junction (HJ) DNA during genetic recombination and DNA repair, while the RuvA-RuvB complex plays an important role in the rescue of blocked DNA replication forks via replication fork reversal (RFR). RuvA specifically binds to HJ cruciform DNA, conferring on it an open structure. The RuvB hexamer acts as an ATP-dependent pump, pulling dsDNA into and through the RuvAB complex. RuvB forms 2 homohexamers on either side of HJ DNA bound by 1 or 2 RuvA tetramers; 4 subunits per hexamer contact DNA at a time. Coordinated motions by a converter formed by DNA-disengaged RuvB subunits stimulates ATP hydrolysis and nucleotide exchange. Immobilization of the converter enables RuvB to convert the ATP-contained energy into a lever motion, pulling 2 nucleotides of DNA out of the RuvA tetramer per ATP hydrolyzed, thus driving DNA branch migration. The RuvB motors rotate together with the DNA substrate, which together with the progressing nucleotide cycle form the mechanistic basis for DNA recombination by continuous HJ branch migration. Branch migration allows RuvC to scan DNA until it finds its consensus sequence, where it cleaves and resolves cruciform DNA. The sequence is that of Holliday junction branch migration complex subunit RuvB from Rhodopseudomonas palustris (strain HaA2).